The primary structure comprises 669 residues: GTP-binding protein 1 (669 aa).

The segment at 1–32 (MAAERSRSPVDSPVPASMFAPEPSSPGAARAA) is disordered. Phosphoserine is present on residues Ser6, Ser8, Ser12, Ser24, Ser25, Ser44, Ser47, and Ser69. The 232-residue stretch at 158–389 (FLEVRVAVVG…LNLLSPRTSY (232 aa)) folds into the tr-type G domain. The tract at residues 167–174 (GNVDAGKS) is G1. 167–174 (GNVDAGKS) is a GTP binding site. Positions 206–210 (GRTSS) are G2. Residues 252–255 (DLAG) form a G3 region. GTP is bound by residues 252–256 (DLAGH) and 308–311 (TKID). The segment at 308–311 (TKID) is G4. A G5 region spans residues 366-368 (SNV). Polar residues-rich tracts occupy residues 573–595 (LLQTTNNSPMNSKPQQIKMQSTK) and 620–637 (DEASSLGTTQAATSSGLQ). The tract at residues 573–669 (LLQTTNNSPM…GACVTPASGC (97 aa)) is disordered. Position 580 is a phosphoserine (Ser580). Positions 646–657 (GRRRGGQRHKVK) are enriched in basic residues.

The protein belongs to the TRAFAC class translation factor GTPase superfamily. Classic translation factor GTPase family. GTPBP1 subfamily. Interacts with EXOSC2/RRP4, EXOSC3/RRP40, EXOSC5/RRP46, HNRNPD, HNRNPR and SYNCRIP. Identified in a complex with HNRNPD, HNRNPL, HNRNPQ, HNRNPR, HNRNPU and AANAT mRNA, but does not bind mRNA by itself. As to expression, detected in pineal gland (at protein level).

It is found in the cytoplasm. Its function is as follows. Promotes degradation of target mRNA species. Plays a role in the regulation of circadian mRNA stability. Binds GTP and has GTPase activity. The protein is GTP-binding protein 1 (Gtpbp1) of Rattus norvegicus (Rat).